A 91-amino-acid polypeptide reads, in one-letter code: Auxin-responsive protein SAUR20 (91 aa).

Belongs to the ARG7 family.

The protein localises to the cell membrane. Functionally, functions as a positive effector of cell expansion through modulation of auxin transport. This is Auxin-responsive protein SAUR20 from Arabidopsis thaliana (Mouse-ear cress).